A 304-amino-acid chain; its full sequence is Thyroxine 5-deiodinase (304 aa).

A disordered region spans residues 1–23; that stretch reads MPRQATSRLVVGEGEGSQGASGP. Residues 1-44 lie on the Cytoplasmic side of the membrane; the sequence is MPRQATSRLVVGEGEGSQGASGPAATMLRSLLLHSLRLCAQTAS. A helical; Signal-anchor for type II membrane protein transmembrane segment spans residues 45 to 67; sequence CLVLFPRFLGTAFMLWLLDFLCI. Residues 68-304 are Extracellular-facing; the sequence is RKHFLGRRRR…QLHGARPRRV (237 aa). Positions 78–99 are disordered; it reads GQPEPEVELNSEGEEVPPDDPP. The span at 82 to 95 shows a compositional bias: acidic residues; sequence PEVELNSEGEEVPP. U170 is an active-site residue. U170 is a non-standard amino acid (selenocysteine).

It belongs to the iodothyronine deiodinase family. In terms of assembly, monomer. Homodimer. May undergo minor heretodimerization with DIO1 and DIO2. Expressed in placenta and several fetal tissues.

The protein localises to the cell membrane. It localises to the endosome membrane. It catalyses the reaction 3,3',5'-triiodo-L-thyronine + iodide + A + H(+) = L-thyroxine + AH2. It carries out the reaction 3,3'-diiodo-L-thyronine + iodide + A + H(+) = 3,3',5-triiodo-L-thyronine + AH2. The enzyme catalyses 3-iodo-L-thyronine + iodide + A + H(+) = 3,5-diiodo-L-thyronine + AH2. The catalysed reaction is L-thyronine + iodide + A + H(+) = 3-iodo-L-thyronine + AH2. It catalyses the reaction 3',5'-diiodo-L-thyronine + iodide + A + H(+) = 3,3',5'-triiodo-L-thyronine + AH2. It carries out the reaction 3'-iodo-L-thyronine + iodide + A + H(+) = 3,3'-diiodo-L-thyronine + AH2. The enzyme catalyses 3,3',5'-triiodothyronamine + iodide + A + H(+) = 3,3',5,5'-tetraiodothyronamine + AH2. The catalysed reaction is 3',5'-diiodothyronamine + iodide + A + H(+) = 3,3',5'-triiodothyronamine + AH2. It catalyses the reaction 3,3'-diiodothyronamine + iodide + A + H(+) = 3,3',5-triiodothyronamine + AH2. It carries out the reaction 3-iodothyronamine + iodide + A + H(+) = 3,5-diiodothyronamine + AH2. The enzyme catalyses 3'-iodothyronamine + iodide + A + H(+) = 3,3'-diiodothyronamine + AH2. The catalysed reaction is thyronamine + iodide + A + H(+) = 3-iodothyronamine + AH2. In terms of biological role, plays a crucial role in the metabolism of thyroid hormones (TH) and has specific roles in TH activation and inactivation by deiodination. Catalyzes the deiodination of L-thyroxine (T4) to 3,3',5'-triiodothyronine (rT3), 3,5,3'-triiodothyronine (T3) to 3,3'-diiodothyronine (3,3'-T2), 3,5-diiodothyronine (3,5-T2) to 3-monoiodothyronine (3-T1), rT3 to 3',5'-diiodothyronine (3',5'-T2) and 3,3'-T2 to 3'-monoiodothyronine (3'-T1) via inner-ring deiodination (IRD). Catalyzes the deiodination of 3-T1 to L-thyronine (T0) via outer-ring deiodination (ORD). Catalyzes the tyrosyl ring deiodinations of 3,3',5,5'-tetraiodothyronamine, 3,3',5'-triiodothyronamine, 3,5,3'-triiodothyronamine, 3,5-diiodothyronamine, 3,3'-diiodothyronamine and 3-iodothyronamine. The polypeptide is Thyroxine 5-deiodinase (DIO3) (Homo sapiens (Human)).